The chain runs to 169 residues: Putative tRNA (cytidine(34)-2'-O)-methyltransferase (169 aa).

Positions 79, 104, 125, and 133 each coordinate S-adenosyl-L-methionine.

The protein belongs to the class IV-like SAM-binding methyltransferase superfamily. RNA methyltransferase TrmH family. TrmL subfamily.

It is found in the cytoplasm. The catalysed reaction is cytidine(34) in tRNA + S-adenosyl-L-methionine = 2'-O-methylcytidine(34) in tRNA + S-adenosyl-L-homocysteine + H(+). It carries out the reaction 5-carboxymethylaminomethyluridine(34) in tRNA(Leu) + S-adenosyl-L-methionine = 5-carboxymethylaminomethyl-2'-O-methyluridine(34) in tRNA(Leu) + S-adenosyl-L-homocysteine + H(+). Functionally, could methylate the ribose at the nucleotide 34 wobble position in tRNA. The protein is Putative tRNA (cytidine(34)-2'-O)-methyltransferase of Listeria monocytogenes serotype 4b (strain F2365).